The primary structure comprises 248 residues: Ankyrin repeat domain-containing protein 45 (248 aa).

Composition is skewed to acidic residues over residues 1 to 10 (MEPEETLESE) and 22 to 33 (EYEESQEAEETG). A disordered region spans residues 1-42 (MEPEETLESESSEKSLFSSQQEYEESQEAEETGAENPLLQPT). ANK repeat units follow at residues 75-104 (VGRNLLYAACMAGKSDVIKALAKYGVNLNE) and 108-137 (RGYTLLHCAAAWGRLETLKALVELDVDIEA).

The protein resides in the cytoplasm. It is found in the midbody. Its subcellular location is the midbody ring. It localises to the cleavage furrow. Its function is as follows. May play a role during cell division. This chain is Ankyrin repeat domain-containing protein 45 (Ankrd45), found in Mus musculus (Mouse).